Consider the following 84-residue polypeptide: Small ribosomal subunit protein uS17 (84 aa).

The protein belongs to the universal ribosomal protein uS17 family. In terms of assembly, part of the 30S ribosomal subunit.

Functionally, one of the primary rRNA binding proteins, it binds specifically to the 5'-end of 16S ribosomal RNA. The sequence is that of Small ribosomal subunit protein uS17 from Clostridium botulinum (strain 657 / Type Ba4).